The chain runs to 459 residues: Limonoid 7-O-acetyltransferse (459 aa).

Catalysis depends on proton acceptor residues His167 and Asp391.

This sequence belongs to the plant acyltransferase family. Monomer. As to expression, expressed in maturing fruits and in juice vesicles.

It carries out the reaction (1S)-1-acetoxy-luvungin A + acetyl-CoA = (1S)-1,7-diacetoxy-luvungin A + CoA. It participates in secondary metabolite biosynthesis; terpenoid biosynthesis. Acetyltransferase involved in the biosynthesis of limonoids triterpene natural products such as limonin, a compound with insecticidal activity responsible for the bitter taste in citrus. Catalyzes the formation of (1S)-1,7-diacetoxy-luvungin A from (1S)-1-acetoxy-luvungin A. The chain is Limonoid 7-O-acetyltransferse from Citrus sinensis (Sweet orange).